Consider the following 378-residue polypeptide: MAKKVKKNEEITKKFGDERRKALDDALKNIEKDFGKGAVMRLGERAEQKVQVMSSGSLALDIALGAGGYPKGRIIEIYGPESSGKTTVALHAVAQAQKEGGIAAFIDAEHALDPAYAAALGVNIDELLLSQPDSGEQGLEIAGKLIDSGAVDLVVVDSVAALVPRAEIDGDIGDNHVGLQARMMSQAMRKLSASINKTKTIAIFINQLREKVGVMFGNPETTPGGRALKFYASVRLDVRGTTQIKGTGDQKDSSIGKETKIKVVKNKVAPPFKVAEVEIMYGEGISRTGELIKIASDLDIIQKAGAWFSYNGEKIGQGSENAKRYLADHPELFDEIDHKVRVKFGLLEDTEESAAADTVAAKADELVLELDDAIEIED.

79 to 86 (GPESSGKT) serves as a coordination point for ATP.

The protein belongs to the RecA family.

It is found in the cytoplasm. Its function is as follows. Can catalyze the hydrolysis of ATP in the presence of single-stranded DNA, the ATP-dependent uptake of single-stranded DNA by duplex DNA, and the ATP-dependent hybridization of homologous single-stranded DNAs. It interacts with LexA causing its activation and leading to its autocatalytic cleavage. The sequence is that of Protein RecA from Streptococcus equi subsp. zooepidemicus (strain H70).